The chain runs to 89 residues: Large ribosomal subunit protein uL23cz/uL23cy (89 aa).

Belongs to the universal ribosomal protein uL23 family. Part of the 50S ribosomal subunit.

It localises to the plastid. Its subcellular location is the chloroplast. Its function is as follows. Binds to 23S rRNA. This is Large ribosomal subunit protein uL23cz/uL23cy (rpl23-A) from Calycanthus floridus var. glaucus (Eastern sweetshrub).